The chain runs to 1123 residues: Eukaryotic translation initiation factor 2-alpha kinase PK4 (1123 aa).

Positions 1 to 30 (MKKRIRSSYKVGSSNKYHKKNYTDNEKDKK) are disordered. Residues 21 to 30 (NYTDNEKDKK) show a composition bias toward basic and acidic residues. ATP contacts are provided by residues 245 to 253 (IGQGGFGSV) and Lys270. 3 disordered regions span residues 409–493 (FYSD…NDEG), 572–609 (RNED…NELD), and 742–800 (ENDD…DDDI). The segment covering 419-428 (KNKENPEKNH) has biased composition (basic and acidic residues). The segment covering 455 to 477 (HKLKKRKNKKKKSKKKRKSKSKI) has biased composition (basic residues). 5 repeat units span residues 576–582 (DKNGLDG), 583–589 (DKNGLDG), 590–596 (DKNGLDG), 597–603 (DKNGLDG), and 604–610 (DKNELDD). A 5 X 7 AA tandem repeat of D-K-N-[GE]-L-D-[GD] region spans residues 576 to 610 (DKNGLDGDKNGLDGDKNGLDGDKNGLDGDKNELDD). The Protein kinase domain maps to 678 to 1049 (TNVESINTNG…KIKVLLDPHL (372 aa)). Residues 743-754 (NDDDDDDDDDDN) are compositionally biased toward acidic residues. Catalysis depends on Asp886, which acts as the Proton acceptor. The residue at position 953 (Thr953) is a Phosphothreonine.

It belongs to the protein kinase superfamily. Ser/Thr protein kinase family. GCN2 subfamily. May form oligomers in response to stress; oligomerization may result in catalytic activity. Interacts with BIP; the interaction is disrupted in response to stress. In terms of processing, auto-phosphorylated.

The protein localises to the endoplasmic reticulum membrane. The enzyme catalyses L-seryl-[protein] + ATP = O-phospho-L-seryl-[protein] + ADP + H(+). The catalysed reaction is L-threonyl-[protein] + ATP = O-phospho-L-threonyl-[protein] + ADP + H(+). Its activity is regulated as follows. Dissociation from BIP and oligomerization, may results autophosphorylation and kinase activity induction. In terms of biological role, during the asexual blood stage, phosphorylates translation factor eIF2alpha in late schizonts resulting in protein translation inhibition. Plays a role in trophozoite differentiation into schizonts. This chain is Eukaryotic translation initiation factor 2-alpha kinase PK4, found in Plasmodium falciparum.